A 1062-amino-acid polypeptide reads, in one-letter code: Exportin-T (1062 aa).

The protein belongs to the exportin family.

The protein localises to the nucleus. It localises to the cytoplasm. Its function is as follows. tRNA nucleus export receptor which facilitates tRNA translocation across the nuclear pore complex. Involved in pre-tRNA splicing, probably by affecting the interaction of pre-tRNA with splicing endonuclease. The chain is Exportin-T (LOS1) from Vanderwaltozyma polyspora (strain ATCC 22028 / DSM 70294 / BCRC 21397 / CBS 2163 / NBRC 10782 / NRRL Y-8283 / UCD 57-17) (Kluyveromyces polysporus).